A 145-amino-acid polypeptide reads, in one-letter code: MIALIQRVSRASVVVDNQTIGAIDKGLLVLLGVEREDNREKMEKLATKVMSYRVFSDENGKMNLNLTQAGGSLLVVSQFTLAADTERGLRPSFSGAGTPEQALGLYEEFVAFCRTKGVNTETGQFAADMKVELVNDGPVTFHLQV.

Residues 137–138 (GP) carry the Gly-cisPro motif, important for rejection of L-amino acids motif.

It belongs to the DTD family. Homodimer.

It is found in the cytoplasm. It catalyses the reaction glycyl-tRNA(Ala) + H2O = tRNA(Ala) + glycine + H(+). It carries out the reaction a D-aminoacyl-tRNA + H2O = a tRNA + a D-alpha-amino acid + H(+). Functionally, an aminoacyl-tRNA editing enzyme that deacylates mischarged D-aminoacyl-tRNAs. Also deacylates mischarged glycyl-tRNA(Ala), protecting cells against glycine mischarging by AlaRS. Acts via tRNA-based rather than protein-based catalysis; rejects L-amino acids rather than detecting D-amino acids in the active site. By recycling D-aminoacyl-tRNA to D-amino acids and free tRNA molecules, this enzyme counteracts the toxicity associated with the formation of D-aminoacyl-tRNA entities in vivo and helps enforce protein L-homochirality. This chain is D-aminoacyl-tRNA deacylase, found in Shewanella oneidensis (strain ATCC 700550 / JCM 31522 / CIP 106686 / LMG 19005 / NCIMB 14063 / MR-1).